The chain runs to 249 residues: 5-amino-6-(5-phospho-D-ribitylamino)uracil phosphatase YcsE (249 aa).

D16 acts as the Nucleophile in catalysis. Mg(2+) is bound at residue D16. Phosphate is bound at residue M17. D18 is a Mg(2+) binding site. Phosphate is bound by residues 50-51 (TG) and K177. Mg(2+)-binding residues include D200 and S201. N203 contributes to the phosphate binding site.

This sequence belongs to the HAD-like hydrolase superfamily. Cof family. The cofactor is Mg(2+).

It carries out the reaction 5-amino-6-(5-phospho-D-ribitylamino)uracil + H2O = 5-amino-6-(D-ribitylamino)uracil + phosphate. It participates in cofactor biosynthesis; riboflavin biosynthesis; 5-amino-6-(D-ribitylamino)uracil from GTP: step 4/4. In terms of biological role, catalyzes the dephosphorylation of the riboflavin precursor 5-amino-6-(5-phospho-D-ribitylamino)uracil and of flavin mononucleotide (FMN) in vitro. To a lesser extent, may also catalyze the dephosphorylation of a broad range of substrates such as phosphorylated sugars and triphosphate nucleotides in vitro. The sequence is that of 5-amino-6-(5-phospho-D-ribitylamino)uracil phosphatase YcsE (ycsE) from Bacillus subtilis (strain 168).